We begin with the raw amino-acid sequence, 42 residues long: uncharacterized protein (42 aa).

This is an uncharacterized protein from Saccharomyces cerevisiae (strain ATCC 204508 / S288c) (Baker's yeast).